We begin with the raw amino-acid sequence, 366 residues long: D-alanine--D-alanine ligase A (366 aa).

One can recognise an ATP-grasp domain in the interval 145-348; that stretch reads KRLLRDAGLK…YRELITALIE (204 aa). 175–230 is a binding site for ATP; that stretch reads VEQLGLPLFVKPANQGSSVGVSKVKREADLRAALDEAFRYDHKVLVEQAVIGREIE. Mg(2+) is bound by residues aspartate 302, glutamate 315, and asparagine 317.

The protein belongs to the D-alanine--D-alanine ligase family. It depends on Mg(2+) as a cofactor. The cofactor is Mn(2+).

Its subcellular location is the cytoplasm. The enzyme catalyses 2 D-alanine + ATP = D-alanyl-D-alanine + ADP + phosphate + H(+). Its pathway is cell wall biogenesis; peptidoglycan biosynthesis. Its function is as follows. Cell wall formation. The chain is D-alanine--D-alanine ligase A from Chromobacterium violaceum (strain ATCC 12472 / DSM 30191 / JCM 1249 / CCUG 213 / NBRC 12614 / NCIMB 9131 / NCTC 9757 / MK).